The primary structure comprises 345 residues: Glycerol-3-phosphate dehydrogenase [NAD(P)+] (345 aa).

The NADPH site is built by serine 11, tryptophan 12, histidine 32, arginine 33, and lysine 106. Positions 106, 137, and 139 each coordinate sn-glycerol 3-phosphate. Alanine 141 provides a ligand contact to NADPH. 5 residues coordinate sn-glycerol 3-phosphate: lysine 192, aspartate 245, serine 255, arginine 256, and asparagine 257. Lysine 192 functions as the Proton acceptor in the catalytic mechanism. Residue arginine 256 coordinates NADPH. The NADPH site is built by valine 280 and glutamate 282.

Belongs to the NAD-dependent glycerol-3-phosphate dehydrogenase family.

The protein localises to the cytoplasm. The catalysed reaction is sn-glycerol 3-phosphate + NAD(+) = dihydroxyacetone phosphate + NADH + H(+). It carries out the reaction sn-glycerol 3-phosphate + NADP(+) = dihydroxyacetone phosphate + NADPH + H(+). It functions in the pathway membrane lipid metabolism; glycerophospholipid metabolism. Its function is as follows. Catalyzes the reduction of the glycolytic intermediate dihydroxyacetone phosphate (DHAP) to sn-glycerol 3-phosphate (G3P), the key precursor for phospholipid synthesis. This Bacillus velezensis (strain DSM 23117 / BGSC 10A6 / LMG 26770 / FZB42) (Bacillus amyloliquefaciens subsp. plantarum) protein is Glycerol-3-phosphate dehydrogenase [NAD(P)+].